Reading from the N-terminus, the 1256-residue chain is Centrosome and spindle pole-associated protein 1 (1256 aa).

Coiled coils occupy residues 38 to 62 and 114 to 135; these read ADNL…LESD and EDYE…RRYL. The segment covering 189–208 has biased composition (basic and acidic residues); the sequence is GKEESSEKFRQVEKSTEPKS. 2 disordered regions span residues 189–244 and 381–403; these read GKEE…LTPS and AENK…CSPF. The span at 222 to 232 shows a compositional bias: polar residues; the sequence is LTSQIQTSCEN. The residue at position 244 (S244) is a Phosphoserine. Residues 244 to 270 adopt a coiled-coil conformation; the sequence is SEAYEELLNQRRLEEDRYRQLDDEIEL. The stretch at 417–449 forms a coiled coil; it reads QRRKEKYRLELLEQMAEQQRNKRREKDLELRVA. A phosphoserine mark is found at S459 and S527. A coiled-coil region spans residues 625–669; it reads SKQSLQSYQEALQQQIREREERRKKEREEKEEYEAKLEAEMRTYN. Disordered stretches follow at residues 735–757 and 813–853; these read ANKS…VFGE and EYEE…KKEE. Residues 736-748 show a composition bias toward polar residues; that stretch reads NKSSGHMQTQSSP. Residues S901 and S920 each carry the phosphoserine modification. The interval 913 to 932 is disordered; that stretch reads SSMSRAQSPPVPARKNQLRA. Residues 925 to 964 adopt a coiled-coil conformation; sequence ARKNQLRAEEEKKNVIMELSEMRKQLRSEERRLQERLLHM. A Phosphoserine modification is found at S966. 2 disordered regions span residues 1114–1147 and 1232–1256; these read EDDV…RPNV and LNQE…TAHG. Residues 1246 to 1256 are compositionally biased toward polar residues; that stretch reads FTWQGLSTAHG.

As to quaternary structure, interacts with PLEKHG6. Interacts with ARMC9, TOGARAM1, CCDC66, CEP104 and CEP290. In terms of processing, phosphorylated. Phosphorylation increases in colcemide-treated cells. As to expression, expressed in adult and fetal brain with enrichment in the cerebellum. Detected in testis.

The protein localises to the cytoplasm. The protein resides in the cytoskeleton. Its subcellular location is the microtubule organizing center. It is found in the centrosome. It localises to the spindle. The protein localises to the spindle pole. The protein resides in the cell projection. Its subcellular location is the cilium. Its function is as follows. May play a role in cell-cycle-dependent microtubule organization. The protein is Centrosome and spindle pole-associated protein 1 (CSPP1) of Homo sapiens (Human).